Reading from the N-terminus, the 1116-residue chain is Rho GTPase-activating protein 45 (1116 aa).

The tract at residues 1–72 (MFSRKKRELM…RPTSLSRHAS (72 aa)) is disordered. The span at 22 to 31 (GSPNPQSSSG) shows a compositional bias: polar residues. Phosphoserine is present on residues Ser23, Ser72, Ser92, and Ser98. The region spanning 268–538 (EEVDMLLQRC…SSKLYDPGQQ (271 aa)) is the F-BAR domain. Residues 375–498 (EHERRRKEIK…QIQEVIRQSD (124 aa)) adopt a coiled-coil conformation. A disordered region spans residues 422–457 (VAKAEEEQQGTGPGAGTAASKALDKRRRLEEEAKNK). The span at 448-457 (RRLEEEAKNK) shows a compositional bias: basic and acidic residues. Phosphoserine is present on residues Ser568, Ser577, Ser591, and Ser618. The disordered stretch occupies residues 569–658 (PIMRTRKGSF…MSSSEELGDQ (90 aa)). A compositionally biased stretch (polar residues) spans 621-635 (ISISDTEVGLDTSSG). The span at 643–652 (TSSSGTMSSS) shows a compositional bias: low complexity. The segment at 699 to 744 (THRLRKLRTPAKCRECNSYVYFQGAECEECCLACHKKCLETLAIQC) adopts a Phorbol-ester/DAG-type zinc-finger fold. One can recognise a Rho-GAP domain in the interval 758–971 (QDFSQAALST…TLIVHYGLVF (214 aa)). Ser946, Ser1017, Ser1020, and Ser1022 each carry phosphoserine. 2 disordered regions span residues 1004-1035 (EEAEDGSRESHAASNDSDSELEDASDPLSSSD) and 1050-1116 (AGLE…PQFV). Polar residues-rich tracts occupy residues 1080 to 1090 (FNTNQSNNTSR) and 1105 to 1116 (GGTSQERQPQFV).

It is found in the cytoplasm. Its subcellular location is the cell projection. The protein resides in the ruffle membrane. In terms of biological role, contains a GTPase activator for the Rho-type GTPases (RhoGAP) domain that would be able to negatively regulate the actin cytoskeleton as well as cell spreading. However, also contains N-terminally a BAR-domin which is able to play an autoinhibitory effect on this RhoGAP activity. The polypeptide is Rho GTPase-activating protein 45 (Mus musculus (Mouse)).